Consider the following 258-residue polypeptide: 5'-nucleotidase SurE (258 aa).

The a divalent metal cation site is built by Asp-8, Asp-9, Ser-40, and Asn-92.

The protein belongs to the SurE nucleotidase family. A divalent metal cation serves as cofactor.

It is found in the cytoplasm. It catalyses the reaction a ribonucleoside 5'-phosphate + H2O = a ribonucleoside + phosphate. In terms of biological role, nucleotidase that shows phosphatase activity on nucleoside 5'-monophosphates. The sequence is that of 5'-nucleotidase SurE from Brucella anthropi (strain ATCC 49188 / DSM 6882 / CCUG 24695 / JCM 21032 / LMG 3331 / NBRC 15819 / NCTC 12168 / Alc 37) (Ochrobactrum anthropi).